A 257-amino-acid chain; its full sequence is Probable pectate lyase E (257 aa).

The signal sequence occupies residues 1 to 17 (MYQKLLLVPLLLTSALA).

Belongs to the polysaccharide lyase 3 family. Ca(2+) serves as cofactor.

The protein localises to the secreted. The enzyme catalyses Eliminative cleavage of (1-&gt;4)-alpha-D-galacturonan to give oligosaccharides with 4-deoxy-alpha-D-galact-4-enuronosyl groups at their non-reducing ends.. In terms of biological role, pectinolytic enzyme consist of four classes of enzymes: pectin lyase, polygalacturonase, pectin methylesterase and rhamnogalacturonase. Among pectinolytic enzymes, pectin lyase is the most important in depolymerization of pectin, since it cleaves internal glycosidic bonds of highly methylated pectins. Favors pectate, the anion, over pectin, the methyl ester. The sequence is that of Probable pectate lyase E (plyE) from Aspergillus flavus (strain ATCC 200026 / FGSC A1120 / IAM 13836 / NRRL 3357 / JCM 12722 / SRRC 167).